The sequence spans 403 residues: Probable tRNA sulfurtransferase (403 aa).

The region spanning 60–165 (QLAEERLKPI…KEGVFLSCRT (106 aa)) is the THUMP domain. ATP-binding positions include 183 to 184 (ML), 208 to 209 (HF), arginine 265, glycine 287, and glutamine 296.

The protein belongs to the ThiI family.

The protein resides in the cytoplasm. The enzyme catalyses [ThiI sulfur-carrier protein]-S-sulfanyl-L-cysteine + a uridine in tRNA + 2 reduced [2Fe-2S]-[ferredoxin] + ATP + H(+) = [ThiI sulfur-carrier protein]-L-cysteine + a 4-thiouridine in tRNA + 2 oxidized [2Fe-2S]-[ferredoxin] + AMP + diphosphate. The catalysed reaction is [ThiS sulfur-carrier protein]-C-terminal Gly-Gly-AMP + S-sulfanyl-L-cysteinyl-[cysteine desulfurase] + AH2 = [ThiS sulfur-carrier protein]-C-terminal-Gly-aminoethanethioate + L-cysteinyl-[cysteine desulfurase] + A + AMP + 2 H(+). The protein operates within cofactor biosynthesis; thiamine diphosphate biosynthesis. Catalyzes the ATP-dependent transfer of a sulfur to tRNA to produce 4-thiouridine in position 8 of tRNAs, which functions as a near-UV photosensor. Also catalyzes the transfer of sulfur to the sulfur carrier protein ThiS, forming ThiS-thiocarboxylate. This is a step in the synthesis of thiazole, in the thiamine biosynthesis pathway. The sulfur is donated as persulfide by IscS. This chain is Probable tRNA sulfurtransferase, found in Listeria monocytogenes serovar 1/2a (strain ATCC BAA-679 / EGD-e).